A 91-amino-acid polypeptide reads, in one-letter code: Putative membrane protein insertion efficiency factor (91 aa).

Positions 66 to 91 are disordered; it reads GGVDPVPSCGCHSDKETTPKEKSDNA. Over residues 77–91 the composition is skewed to basic and acidic residues; that stretch reads HSDKETTPKEKSDNA.

The protein belongs to the UPF0161 family.

Its subcellular location is the cell inner membrane. Could be involved in insertion of integral membrane proteins into the membrane. In Hydrogenovibrio crunogenus (strain DSM 25203 / XCL-2) (Thiomicrospira crunogena), this protein is Putative membrane protein insertion efficiency factor.